A 314-amino-acid chain; its full sequence is ATP synthase gamma chain (314 aa).

This sequence belongs to the ATPase gamma chain family. As to quaternary structure, F-type ATPases have 2 components, CF(1) - the catalytic core - and CF(0) - the membrane proton channel. CF(1) has five subunits: alpha(3), beta(3), gamma(1), delta(1), epsilon(1). CF(0) has three main subunits: a, b and c.

The protein localises to the cellular thylakoid membrane. Produces ATP from ADP in the presence of a proton gradient across the membrane. The gamma chain is believed to be important in regulating ATPase activity and the flow of protons through the CF(0) complex. This is ATP synthase gamma chain from Synechococcus sp. (strain JA-2-3B'a(2-13)) (Cyanobacteria bacterium Yellowstone B-Prime).